An 816-amino-acid polypeptide reads, in one-letter code: Phosphatidylinositol 4-kinase beta (816 aa).

The segment at 1 to 30 (MGDTVVEPAPLKPTSEPTSGPPGNNGGSLL) is disordered. Gly-2 is subject to N-acetylglycine. The PIK helical domain maps to 29 to 242 (LLSVITEGVG…GTKLRKLILS (214 aa)). Positions 41 to 67 (SVIDPEVAQKACQEVLEKVKLLHGGVA) are interaction with ACBD3. Disordered regions lie at residues 101–120 (EDEM…RRRR) and 248–318 (AHRK…SFSS). At Ser-258 the chain carries Phosphoserine. At Thr-263 the chain carries Phosphothreonine. Residues Ser-266, Ser-275, Ser-277, Ser-284, and Ser-294 each carry the phosphoserine modification. 2 stretches are compositionally biased toward polar residues: residues 278–297 (DATA…SNPK) and 306–318 (SSST…SFSS). Ser-428 bears the Phosphoserine mark. At Thr-438 the chain carries Phosphothreonine. The residue at position 511 (Ser-511) is a Phosphoserine. Phosphothreonine is present on residues Thr-517 and Thr-519. Residues 535 to 801 (EPWQEKVRRI…MVDGSMRSIT (267 aa)) form the PI3K/PI4K catalytic domain. A G-loop region spans residues 541–547 (VRRIREG). Residues 668–676 (QVKDRHNGN) form a catalytic loop region. An activation loop region spans residues 687–711 (HIDFGFILSSSPRNLGFETSAFKLT).

It belongs to the PI3/PI4-kinase family. Type III PI4K subfamily. As to quaternary structure, interacts with ARF1 and ARF3 in the Golgi complex, but not with ARF4, ARF5 or ARF6. Interacts with NCS1/FREQ in a calcium-independent manner. Interacts with CALN1/CABP8 and CALN2/CABP7; in a calcium-dependent manner; this interaction competes with NCS1/FREQ binding. Interacts with ACBD3. Interacts with ARMH3, YWHAB, YWHAE, YWHAG, YWHAH, YWHAQ, YWHAZ and SFN. Interacts with GGA2 (via VHS domain); the interaction is important for PI4KB location at the Golgi apparatus membrane. Interacts with ATG9A. (Microbial infection) Interacts with Aichi virus protein 3A. Part of a complex Aichi virus protein 3A/ACBD3/PI4KB that allows the synthesis of PI4P at the viral RNA replication sites. Mg(2+) is required as a cofactor. The cofactor is Mn(2+). In terms of tissue distribution, widely expressed with highest levels in heart, skeletal muscle, pancreas, testis and ovary. Weakly expressed in liver. Expressed in the innear ear in the epithelium of the spinal organ of corti.

The protein resides in the endomembrane system. It localises to the mitochondrion outer membrane. The protein localises to the rough endoplasmic reticulum membrane. It is found in the golgi apparatus. Its subcellular location is the golgi apparatus membrane. The protein resides in the cytoplasm. It localises to the perinuclear region. The enzyme catalyses a 1,2-diacyl-sn-glycero-3-phospho-(1D-myo-inositol) + ATP = a 1,2-diacyl-sn-glycero-3-phospho-(1D-myo-inositol 4-phosphate) + ADP + H(+). With respect to regulation, inhibited by wortmannin and adenosine. Increased kinase activity upon interaction with NCS1/FREQ. Its activity is regulated as follows. (Microbial infection) Activated by Aichi virus protein 3A, this activation is sensitized by ACBD3. Phosphorylates phosphatidylinositol (PI) in the first committed step in the production of the second messenger inositol-1,4,5,-trisphosphate (PIP). May regulate Golgi disintegration/reorganization during mitosis, possibly via its phosphorylation. Involved in Golgi-to-plasma membrane trafficking. May play an important role in the inner ear development. In terms of biological role, (Microbial infection) Plays an essential role in Aichi virus RNA replication. Recruited by ACBD3 at the viral replication sites. Its function is as follows. (Microbial infection) Required for cellular spike-mediated entry of human coronavirus SARS-CoV. This is Phosphatidylinositol 4-kinase beta from Homo sapiens (Human).